Reading from the N-terminus, the 301-residue chain is Sulfate adenylyltransferase subunit 2 1 (301 aa).

Belongs to the PAPS reductase family. CysD subfamily. As to quaternary structure, heterodimer composed of CysD, the smaller subunit, and CysN.

It carries out the reaction sulfate + ATP + H(+) = adenosine 5'-phosphosulfate + diphosphate. It functions in the pathway sulfur metabolism; hydrogen sulfide biosynthesis; sulfite from sulfate: step 1/3. In terms of biological role, with CysN forms the ATP sulfurylase (ATPS) that catalyzes the adenylation of sulfate producing adenosine 5'-phosphosulfate (APS) and diphosphate, the first enzymatic step in sulfur assimilation pathway. APS synthesis involves the formation of a high-energy phosphoric-sulfuric acid anhydride bond driven by GTP hydrolysis by CysN coupled to ATP hydrolysis by CysD. The protein is Sulfate adenylyltransferase subunit 2 1 of Shewanella sediminis (strain HAW-EB3).